The chain runs to 246 residues: tRNA (guanine-N(1)-)-methyltransferase (246 aa).

S-adenosyl-L-methionine-binding positions include G113 and 133 to 138; that span reads IGDYVL.

This sequence belongs to the RNA methyltransferase TrmD family. As to quaternary structure, homodimer.

The protein resides in the cytoplasm. It carries out the reaction guanosine(37) in tRNA + S-adenosyl-L-methionine = N(1)-methylguanosine(37) in tRNA + S-adenosyl-L-homocysteine + H(+). In terms of biological role, specifically methylates guanosine-37 in various tRNAs. The chain is tRNA (guanine-N(1)-)-methyltransferase from Yersinia pseudotuberculosis serotype O:1b (strain IP 31758).